The primary structure comprises 330 residues: Flotillin-like protein FloA (330 aa).

2 helical membrane passes run 5-25 (IILP…LFTF) and 28-48 (VALW…TLIG).

This sequence belongs to the flotillin-like FloA family. Homooligomerizes.

The protein localises to the cell membrane. The protein resides in the membrane raft. Functionally, found in functional membrane microdomains (FMM) that may be equivalent to eukaryotic membrane rafts. FMMs are highly dynamic and increase in number as cells age. Flotillins are thought to be important factors in membrane fluidity. This chain is Flotillin-like protein FloA, found in Oceanobacillus iheyensis (strain DSM 14371 / CIP 107618 / JCM 11309 / KCTC 3954 / HTE831).